Reading from the N-terminus, the 78-residue chain is Small ribosomal subunit protein uS17 (78 aa).

Belongs to the universal ribosomal protein uS17 family. In terms of assembly, part of the 30S ribosomal subunit.

One of the primary rRNA binding proteins, it binds specifically to the 5'-end of 16S ribosomal RNA. In Wolbachia pipientis wMel, this protein is Small ribosomal subunit protein uS17.